A 341-amino-acid chain; its full sequence is MAP3K12-binding inhibitory protein 1 (341 aa).

At S91 the chain carries Phosphoserine. Glycyl lysine isopeptide (Lys-Gly) (interchain with G-Cter in SUMO2) cross-links involve residues K94, K127, K137, K151, and K233. The interval 170–341 (AEINENNVRE…EADSMAAHLP (172 aa)) is interaction with MAP3K12. Residues 269-283 (IYQRIKKLEDKILEL) are leucine-zipper 1. K299 is subject to N6-acetyllysine; alternate. K299 is covalently cross-linked (Glycyl lysine isopeptide (Lys-Gly) (interchain with G-Cter in SUMO2); alternate). Glycyl lysine isopeptide (Lys-Gly) (interchain with G-Cter in SUMO2) cross-links involve residues K302 and K323. The interval 312–327 (LAELDEKISALKRALL) is leucine-zipper 2.

As to quaternary structure, component of the ADA2A-containing complex (ATAC), composed of KAT14, KAT2A, TADA2L, TADA3L, ZZ3, MBIP, WDR5, YEATS2, CCDC101 and DR1. In the complex, it probably interacts directly with KAT2A, KAT14 and WDR5.

The protein resides in the nucleus. It localises to the cytoplasm. Its function is as follows. Inhibits the MAP3K12 activity to induce the activation of the JNK/SAPK pathway. Component of the ATAC complex, a complex with histone acetyltransferase activity on histones H3 and H4. This is MAP3K12-binding inhibitory protein 1 (Mbip) from Mus musculus (Mouse).